The following is a 1312-amino-acid chain: DNA repair protein RAD50 (1312 aa).

ATP is bound by residues Arg13, Asn38, Gly39, Gly41, Lys42, Thr43, Thr44, Val67, Asp69, and Gln159. Thr43 serves as a coordination point for Mg(2+). Gln159 provides a ligand contact to Mg(2+). 3 coiled-coil regions span residues 228–359 (TSKE…QADR), 401–598 (RERQ…AKLN), and 635–673 (SQDF…ITQL). Ser635 carries the phosphoserine; by ATM modification. In terms of domain architecture, Zinc-hook spans 635-734 (SQDFESDLDR…RRDEMLGLVP (100 aa)). Residues Cys681 and Cys684 each contribute to the Zn(2+) site. Thr690 is modified (phosphothreonine). 2 coiled-coil regions span residues 706–734 (RLAP…GLVP) and 789–1079 (LTDV…GRQK). N6-acetyllysine is present on Lys959.

This sequence belongs to the SMC family. RAD50 subfamily. Component of the MRN complex composed of two heterodimers RAD50 and MRE11 associated with a single NBN. The MRN complexes dimerize on DNA to form joined MRN-MRN oligomers required for DNA double-strand break repair. As part of the MRN complex, interacts with MCM8 and MCM9; the interaction recruits the complex to DNA repair sites. Component of the BASC complex, at least composed of BRCA1, MSH2, MSH6, MLH1, ATM, BLM, RAD50, MRE11 and NBN. Found in a complex with TERF2. Interacts with RINT1. Interacts with BRCA1 via its N-terminal domain. Interacts with DCLRE1C/Artemis. Interacts with MRNIP. Interacts with CYREN (via XLF motif). Interacts with C1QBP and MRE11; interaction takes place in absence of DNA damage to form the MRC (MRE11-RAD50-C1QBP) complex that inhibits the activity of MRE11. In terms of assembly, (Microbial infection) Interacts with herpes simplex virus 1 protein UL12. Zn(2+) is required as a cofactor. Post-translationally, phosphorylation at Ser-635 by ATM in response to DNA damage is required for double-strand break (DSB) repair. Expressed at very low level in most tissues, except in testis where it is expressed at higher level. Expressed in fibroblasts.

It is found in the nucleus. The protein localises to the chromosome. It localises to the telomere. It carries out the reaction ATP + H2O = ADP + phosphate + H(+). Component of the MRN complex, which plays a central role in double-strand break (DSB) repair, DNA recombination, maintenance of telomere integrity and meiosis. The MRN complex is involved in the repair of DNA double-strand breaks (DSBs) via homologous recombination (HR), an error-free mechanism which primarily occurs during S and G2 phases. The complex (1) mediates the end resection of damaged DNA, which generates proper single-stranded DNA, a key initial steps in HR, and is (2) required for the recruitment of other repair factors and efficient activation of ATM and ATR upon DNA damage. The MRN complex possesses single-strand endonuclease activity and double-strand-specific 3'-5' exonuclease activity, which are provided by MRE11, to initiate end resection, which is required for single-strand invasion and recombination. Within the complex, RAD50 is both required to bind DNA ends and hold them in close proximity and regulate the activity of MRE11. RAD50 provides an ATP-dependent control of MRE11 by positioning DNA ends into the MRE11 active site: ATP-binding induces a large structural change from an open form with accessible MRE11 nuclease sites into a closed form. The MRN complex is also required for DNA damage signaling via activation of the ATM and ATR kinases: the nuclease activity of MRE11 is not required to activate ATM and ATR. The MRN complex is also required for the processing of R-loops. In telomeres the MRN complex may modulate t-loop formation. The chain is DNA repair protein RAD50 from Homo sapiens (Human).